Reading from the N-terminus, the 433-residue chain is Zinc carboxypeptidase A 1 (433 aa).

The signal sequence occupies residues 1–28 (MVRLNSAAGSRWWAPAMAILAVALSVEA). The Peptidase M14 domain maps to 130-423 (DYHTLEEIHA…DSLITLLEES (294 aa)). Zn(2+) is bound by residues histidine 187 and glutamate 190. Cysteine 253 and cysteine 276 are oxidised to a cystine. Zn(2+) is bound at residue histidine 312. The Proton donor/acceptor role is filled by glutamate 387.

Belongs to the peptidase M14 family. It depends on Zn(2+) as a cofactor. Expressed in the posterior midgut in pupae and female adults.

The protein localises to the secreted. Functionally, involved in the digestion of the blood meal. This Anopheles gambiae (African malaria mosquito) protein is Zinc carboxypeptidase A 1.